A 632-amino-acid chain; its full sequence is MHGLLLAAGLLSLPLHVLAHPQPGTSLAGRAVDLNAYRMADRASYMSSDEMQAQQPHIASVSAGGYVETATEVVKRVMPGMTFRLVDDHYVGVSGISHVYFRQTMHGMDIDNSDFNVNIGKDGKVLSYGNSFYTGPAPDKAPMVKRDFSDPMQALHGVRKALNLPITADKATVKTVNEHEVTFMGTTGALSDPSAKLCYMAKEDGSLALTWRVETDMGDNWLLSYVDAKSTDQVHNVVDYVSHATYQVYRWPIPDPTEGKREILENPWNLRTSPFTWISDGKNNYTTTRGNNAIAQANPDGGNEYLNNYRPNNKNLKFEYPYSPNMSPPKTYIDASITQLFYSANMVHDLYYMLGFTEKAGNFQVNNRGQGGKGNDFVILNAQDGSGTNNANFATPPDGQPGRMRVYIWTKAQPARDSSFEAGTVIHEYTHGLSNRLCGGPANSACLNGLESGGMGEGWGDFFATAIRLKPNDNRNANYVHGEWVNNSPKGNRLFPYSTSLKTNPLVYTSCNKYNEVHAIGTVWASILYEVLWNLIDKHGKNDGPTPVFENGVPKDGKYLSLKLVLDGMAIQPCKPNFVQARNAIIDADKNLTKGANKCELWKAFAKRGLGTGAKYDPKNRTGSTAVPKECQ.

Positions 1-20 (MHGLLLAAGLLSLPLHVLAH) are cleaved as a signal peptide. The propeptide occupies 21-244 (PQPGTSLAGR…HNVVDYVSHA (224 aa)). N-linked (GlcNAc...) asparagine glycosylation is present at N284. H427 contributes to the Zn(2+) binding site. E428 is an active-site residue. A Zn(2+)-binding site is contributed by H431. Residues N591 and N620 are each glycosylated (N-linked (GlcNAc...) asparagine).

The protein belongs to the peptidase M36 family. Zn(2+) is required as a cofactor.

Its subcellular location is the secreted. Secreted metalloproteinase probably acting as a virulence factor. In Arthroderma otae (strain ATCC MYA-4605 / CBS 113480) (Microsporum canis), this protein is Extracellular metalloproteinase 5 (MEP5).